The primary structure comprises 156 residues: ATP synthase subunit b (156 aa).

The chain crosses the membrane as a helical span at residues 7–27; it reads LFAQMVVFLILAWFTMKFVWP.

It belongs to the ATPase B chain family. As to quaternary structure, F-type ATPases have 2 components, F(1) - the catalytic core - and F(0) - the membrane proton channel. F(1) has five subunits: alpha(3), beta(3), gamma(1), delta(1), epsilon(1). F(0) has three main subunits: a(1), b(2) and c(10-14). The alpha and beta chains form an alternating ring which encloses part of the gamma chain. F(1) is attached to F(0) by a central stalk formed by the gamma and epsilon chains, while a peripheral stalk is formed by the delta and b chains.

It is found in the cell inner membrane. Its function is as follows. F(1)F(0) ATP synthase produces ATP from ADP in the presence of a proton or sodium gradient. F-type ATPases consist of two structural domains, F(1) containing the extramembraneous catalytic core and F(0) containing the membrane proton channel, linked together by a central stalk and a peripheral stalk. During catalysis, ATP synthesis in the catalytic domain of F(1) is coupled via a rotary mechanism of the central stalk subunits to proton translocation. Component of the F(0) channel, it forms part of the peripheral stalk, linking F(1) to F(0). This chain is ATP synthase subunit b, found in Paraburkholderia xenovorans (strain LB400).